We begin with the raw amino-acid sequence, 131 residues long: Ribosomally synthesized cyclic peptide phomopsin precursor gigA (131 aa).

An N-terminal signal peptide occupies residues 1–18 (MQFTLIFFYATLAAFGLA). 5 propeptides span residues 19–38 (APSE…LDKR), 48–65 (ADLV…LDKR), 75–92 (ADMV…LDKR), 102–119 (ADMV…LAKR), and 129–131 (ADM).

In terms of processing, gigA is processed by several endopeptidases including kexin proteases to produce 2 identical copies of the nonaxapeptide Ile-Asn-Phe-Lys-Ile-Pro-Tyr-Thr-Gly, one copy of the nonaketide Ile-Gly-Phe-Lys-Leu-Pro-Tyr-Arg-Gly and one copy of the nonaketide Pro-Asn-Phe-Lys-Met-Pro-Tyr-Arg-Gly, that are further modified into phomapsins B, C and A, respectively. After being excised from the precursor peptide, the core peptides are cyclized and modified post-translationally by enzymes encoded within the gene cluster. Epichloecyclin biosynthesis requires only dimethylation of the side-chain amino group of the conserved lysine for completion.

It participates in mycotoxin biosynthesis. Functionally, ribosomally synthesized cyclic peptide phomopsin precursor; part of the gene cluster that mediates the biosynthesis of the epichloecyclins, a group of nonapeptides, with a likely cyclic structure and dimethylation of the conserved lysine. The gigA translated product contains 4 repeated peptide embedding the nonapeptide Ile-Asn-Phe-Lys-Ile-Pro-Tyr-Thr-Gly in repeats 1 and 2, Ile-Gly-Phe-Lys-Leu-Pro-Tyr-Arg-Gly in repeat 3, and Pro-Asn-Phe-Lys-Met-Pro-Tyr-Arg-Gly in repeat 4 that are converted into epichloecyclins B, C and A, respectively. Moreover, removal of the last Gly residue in epichloecyclins B and C leads to epichloecyclins D and E, respectively. The sequence is that of Ribosomally synthesized cyclic peptide phomopsin precursor gigA (nc25) from Epichloe festucae (strain Fl1).